Here is a 793-residue protein sequence, read N- to C-terminus: Phosphoribosylformylglycinamidine synthase subunit PurL (793 aa).

Histidine 53 is a catalytic residue. ATP is bound by residues tyrosine 56 and lysine 95. Glutamate 97 serves as a coordination point for Mg(2+). Substrate is bound by residues 98–101 and arginine 120; that span reads SHNH. Catalysis depends on histidine 99, which acts as the Proton acceptor. A Mg(2+)-binding site is contributed by aspartate 121. A substrate-binding site is contributed by glutamine 244. Aspartate 272 is a binding site for Mg(2+). A substrate-binding site is contributed by 316 to 318; that stretch reads ESQ. Positions 523 and 560 each coordinate ATP. Asparagine 561 lines the Mg(2+) pocket. Serine 563 is a binding site for substrate.

The protein belongs to the FGAMS family. As to quaternary structure, monomer. Part of the FGAM synthase complex composed of 1 PurL, 1 PurQ and 2 PurS subunits.

The protein localises to the cytoplasm. It carries out the reaction N(2)-formyl-N(1)-(5-phospho-beta-D-ribosyl)glycinamide + L-glutamine + ATP + H2O = 2-formamido-N(1)-(5-O-phospho-beta-D-ribosyl)acetamidine + L-glutamate + ADP + phosphate + H(+). It participates in purine metabolism; IMP biosynthesis via de novo pathway; 5-amino-1-(5-phospho-D-ribosyl)imidazole from N(2)-formyl-N(1)-(5-phospho-D-ribosyl)glycinamide: step 1/2. Its function is as follows. Part of the phosphoribosylformylglycinamidine synthase complex involved in the purines biosynthetic pathway. Catalyzes the ATP-dependent conversion of formylglycinamide ribonucleotide (FGAR) and glutamine to yield formylglycinamidine ribonucleotide (FGAM) and glutamate. The FGAM synthase complex is composed of three subunits. PurQ produces an ammonia molecule by converting glutamine to glutamate. PurL transfers the ammonia molecule to FGAR to form FGAM in an ATP-dependent manner. PurS interacts with PurQ and PurL and is thought to assist in the transfer of the ammonia molecule from PurQ to PurL. This Prochlorococcus marinus (strain SARG / CCMP1375 / SS120) protein is Phosphoribosylformylglycinamidine synthase subunit PurL.